The chain runs to 946 residues: Structure-specific endonuclease subunit SLX4 (946 aa).

Residues 1-14 (MPASPLPALSPPAS) show a composition bias toward pro residues. 7 disordered regions span residues 1-35 (MPAS…IPPD), 54-119 (QHFD…EEAV), 147-318 (PSDE…GGFT), 339-399 (ADSA…AAQL), 416-471 (TKVP…PKHI), 577-748 (FPLL…GSGR), and 765-799 (ALSP…KADS). Over residues 54-74 (QHFDDDIAGKDQEQSRKKSPE) the composition is skewed to basic and acidic residues. 2 stretches are compositionally biased toward basic residues: residues 160 to 169 (KAGKPRKPRA) and 182 to 195 (KPKR…KAAK). Basic and acidic residues predominate over residues 278-287 (AVSRRRDWTP). Residues 453–469 (SKARSKKASTKAAAKPK) show a composition bias toward basic residues. A compositionally biased stretch (basic and acidic residues) spans 627–636 (KANDEPDHVM). Polar residues predominate over residues 707–717 (KSQSAIATSGS). Residues 722–733 (KEPKRTKGKEVK) are compositionally biased toward basic and acidic residues.

This sequence belongs to the SLX4 family. In terms of assembly, forms a heterodimer with SLX1. In terms of processing, phosphorylated in response to DNA damage.

The protein resides in the nucleus. In terms of biological role, regulatory subunit of the SLX1-SLX4 structure-specific endonuclease that resolves DNA secondary structures generated during DNA repair and recombination. Has endonuclease activity towards branched DNA substrates, introducing single-strand cuts in duplex DNA close to junctions with ss-DNA. The protein is Structure-specific endonuclease subunit SLX4 of Phaeosphaeria nodorum (strain SN15 / ATCC MYA-4574 / FGSC 10173) (Glume blotch fungus).